The following is a 61-amino-acid chain: Small ribosomal subunit protein uS14C (61 aa).

4 residues coordinate Zn(2+): C24, C27, C40, and C43.

This sequence belongs to the universal ribosomal protein uS14 family. Zinc-binding uS14 subfamily. As to quaternary structure, part of the 30S ribosomal subunit. Contacts proteins S3 and S10. Requires Zn(2+) as cofactor.

Its function is as follows. Binds 16S rRNA, required for the assembly of 30S particles and may also be responsible for determining the conformation of the 16S rRNA at the A site. The sequence is that of Small ribosomal subunit protein uS14C from Enterococcus faecalis (strain ATCC 700802 / V583).